The following is a 167-amino-acid chain: NAD(P)H-quinone oxidoreductase subunit I, chloroplastic (167 aa).

2 4Fe-4S ferredoxin-type domains span residues Gly55 to Lys84 and Leu95 to Glu124. Positions 64, 67, 70, 74, 104, 107, 110, and 114 each coordinate [4Fe-4S] cluster.

Belongs to the complex I 23 kDa subunit family. In terms of assembly, NDH is composed of at least 16 different subunits, 5 of which are encoded in the nucleus. The cofactor is [4Fe-4S] cluster.

The protein resides in the plastid. Its subcellular location is the chloroplast thylakoid membrane. The enzyme catalyses a plastoquinone + NADH + (n+1) H(+)(in) = a plastoquinol + NAD(+) + n H(+)(out). The catalysed reaction is a plastoquinone + NADPH + (n+1) H(+)(in) = a plastoquinol + NADP(+) + n H(+)(out). NDH shuttles electrons from NAD(P)H:plastoquinone, via FMN and iron-sulfur (Fe-S) centers, to quinones in the photosynthetic chain and possibly in a chloroplast respiratory chain. The immediate electron acceptor for the enzyme in this species is believed to be plastoquinone. Couples the redox reaction to proton translocation, and thus conserves the redox energy in a proton gradient. In Atropa belladonna (Belladonna), this protein is NAD(P)H-quinone oxidoreductase subunit I, chloroplastic.